Consider the following 177-residue polypeptide: Protein SOB FIVE-LIKE 6 (177 aa).

The SOFL-A motif lies at 14 to 19 (SGWTMY). Disordered regions lie at residues 37–60 (ETKQ…PYYC) and 78–104 (KSKS…FNSS). Residues 47-56 (SMVSDASSGP) carry the SOFL-B motif. Over residues 79-90 (SKSKNKNKNKKK) the composition is skewed to basic residues.

The protein belongs to the SOFL plant protein family. As to expression, expressed in seedlings, flowers and siliques. Barely detectable in roots and leaves.

The protein resides in the cytoplasm. It is found in the nucleus. Its function is as follows. Involved in cytokinin-mediated development. The protein is Protein SOB FIVE-LIKE 6 of Arabidopsis thaliana (Mouse-ear cress).